The primary structure comprises 196 residues: Ribosomal RNA large subunit methyltransferase E (196 aa).

S-adenosyl-L-methionine contacts are provided by Gly-50, Trp-52, Asp-70, Asp-87, and Asp-112. Lys-152 serves as the catalytic Proton acceptor.

This sequence belongs to the class I-like SAM-binding methyltransferase superfamily. RNA methyltransferase RlmE family.

The protein resides in the cytoplasm. The catalysed reaction is uridine(2552) in 23S rRNA + S-adenosyl-L-methionine = 2'-O-methyluridine(2552) in 23S rRNA + S-adenosyl-L-homocysteine + H(+). Specifically methylates the uridine in position 2552 of 23S rRNA at the 2'-O position of the ribose in the fully assembled 50S ribosomal subunit. The polypeptide is Ribosomal RNA large subunit methyltransferase E (Bdellovibrio bacteriovorus (strain ATCC 15356 / DSM 50701 / NCIMB 9529 / HD100)).